We begin with the raw amino-acid sequence, 351 residues long: 7,8-didemethyl-8-hydroxy-5-deazariboflavin synthase (351 aa).

The 241-residue stretch at 35-275 (ITYSKNAFIP…EDISIQVPPN (241 aa)) folds into the Radical SAM core domain. Cys-49, Cys-53, and Cys-56 together coordinate [4Fe-4S] cluster.

This sequence belongs to the radical SAM superfamily. CofG family. As to quaternary structure, consists of two subunits, CofG and CofH. [4Fe-4S] cluster serves as cofactor.

It carries out the reaction 5-amino-5-(4-hydroxybenzyl)-6-(D-ribitylimino)-5,6-dihydrouracil + S-adenosyl-L-methionine = 7,8-didemethyl-8-hydroxy-5-deazariboflavin + 5'-deoxyadenosine + L-methionine + NH4(+) + H(+). It functions in the pathway cofactor biosynthesis; coenzyme F0 biosynthesis. Functionally, catalyzes the radical-mediated synthesis of 7,8-didemethyl-8-hydroxy-5-deazariboflavin from 5-amino-5-(4-hydroxybenzyl)-6-(D-ribitylimino)-5,6-dihydrouracil. The sequence is that of 7,8-didemethyl-8-hydroxy-5-deazariboflavin synthase from Methanococcus vannielii (strain ATCC 35089 / DSM 1224 / JCM 13029 / OCM 148 / SB).